Here is a 149-residue protein sequence, read N- to C-terminus: SsrA-binding protein (149 aa).

The protein belongs to the SmpB family.

Its subcellular location is the cytoplasm. Functionally, required for rescue of stalled ribosomes mediated by trans-translation. Binds to transfer-messenger RNA (tmRNA), required for stable association of tmRNA with ribosomes. tmRNA and SmpB together mimic tRNA shape, replacing the anticodon stem-loop with SmpB. tmRNA is encoded by the ssrA gene; the 2 termini fold to resemble tRNA(Ala) and it encodes a 'tag peptide', a short internal open reading frame. During trans-translation Ala-aminoacylated tmRNA acts like a tRNA, entering the A-site of stalled ribosomes, displacing the stalled mRNA. The ribosome then switches to translate the ORF on the tmRNA; the nascent peptide is terminated with the 'tag peptide' encoded by the tmRNA and targeted for degradation. The ribosome is freed to recommence translation, which seems to be the essential function of trans-translation. This chain is SsrA-binding protein, found in Wolbachia pipientis subsp. Culex pipiens (strain wPip).